The following is a 532-amino-acid chain: Protein DETOXIFICATION 48 (532 aa).

The next 12 helical transmembrane spans lie at 65 to 85 (ISGPTAMTGLLMYSRAMISML), 95 to 115 (LAGGSLSIGFANITGYSVISG), 136 to 156 (LGLTLQRTVLLLLSCSVPISF), 174 to 194 (ISSVAQQFLLFAIPDLFLLSL), 211 to 231 (VTYSTAVSVLLHVPLNYLLVV), 235 to 255 (MGVAGVAIAMVLTNLNLVVLL), 279 to 301 (GWSALLSLAIPTCVSVCLEWWWY), 322 to 342 (GILIQTTALVYVFPSSLSLGV), 363 to 383 (IISLFCAIALGLMAMVFAVLV), 397 to 417 (ILQLTSIALPIVGLCELGNCP), 437 to 457 (INLGSFYFVGMPVAILFGFVF), and 464 to 484 (LWFGLLAAQATCASLMLCALL). The segment at 496 to 532 (EELTSQTPGKSPPLLPIASSKSRSTSGTEDMMRTMLV) is disordered. Over residues 514-523 (SSKSRSTSGT) the composition is skewed to polar residues.

This sequence belongs to the multi antimicrobial extrusion (MATE) (TC 2.A.66.1) family. In terms of tissue distribution, highly expressed in shoot apices relative to leaves. At vegetative stages, highly expressed at the stipules. At reproductive stages, most highly expressed in the mature pollen. Also expressed in the tips of sepals.

It is found in the golgi apparatus membrane. The protein localises to the late endosome membrane. In terms of biological role, functions as a multidrug and toxin extrusion transporter. Contributes to iron homeostasis during stress responses and senescence. Could be involved in specifying the lateral organ initiation rate. May act as a negative regulator of hypocotyl cell elongation in the light. In Arabidopsis thaliana (Mouse-ear cress), this protein is Protein DETOXIFICATION 48.